Reading from the N-terminus, the 156-residue chain is Peptidyl-prolyl cis-trans isomerase cypE (156 aa).

In terms of domain architecture, PPIase cyclophilin-type spans 2–155 (TEQTVTLQTT…DEIRIIKATA (154 aa)).

Belongs to the cyclophilin-type PPIase family. In terms of assembly, interacts with snwA.

The protein localises to the cytoplasm. The protein resides in the nucleus. It catalyses the reaction [protein]-peptidylproline (omega=180) = [protein]-peptidylproline (omega=0). Functionally, catalyzes the cis-trans isomerization of proline imidic peptide bonds in oligopeptides. Plays a role in protein folding, transport and assembly. The protein is Peptidyl-prolyl cis-trans isomerase cypE (cypE) of Dictyostelium discoideum (Social amoeba).